Here is a 596-residue protein sequence, read N- to C-terminus: Proteasome-associated ATPase (596 aa).

A coiled-coil region spans residues 12–94; it reads SRWERETQDL…KEEIDRLAQP (83 aa). Residue 280 to 285 coordinates ATP; the sequence is GCGKTL. Residues 595–596 form a docks into pockets in the proteasome alpha-ring region; that stretch reads YL.

This sequence belongs to the AAA ATPase family. As to quaternary structure, homohexamer. Assembles into a hexameric ring structure that caps the 20S proteasome core. Strongly interacts with the prokaryotic ubiquitin-like protein Pup through a hydrophobic interface; the interacting region of ARC lies in its N-terminal coiled-coil domain. There is one Pup binding site per ARC hexamer ring. Upon ATP-binding, the C-terminus of ARC interacts with the alpha-rings of the proteasome core, possibly by binding to the intersubunit pockets.

It functions in the pathway protein degradation; proteasomal Pup-dependent pathway. In terms of biological role, ATPase which is responsible for recognizing, binding, unfolding and translocation of pupylated proteins into the bacterial 20S proteasome core particle. May be essential for opening the gate of the 20S proteasome via an interaction with its C-terminus, thereby allowing substrate entry and access to the site of proteolysis. Thus, the C-termini of the proteasomal ATPase may function like a 'key in a lock' to induce gate opening and therefore regulate proteolysis. This Stackebrandtia nassauensis (strain DSM 44728 / CIP 108903 / NRRL B-16338 / NBRC 102104 / LLR-40K-21) protein is Proteasome-associated ATPase.